The following is an 86-amino-acid chain: Cell division topological specificity factor (86 aa).

Belongs to the MinE family.

Its function is as follows. Prevents the cell division inhibition by proteins MinC and MinD at internal division sites while permitting inhibition at polar sites. This ensures cell division at the proper site by restricting the formation of a division septum at the midpoint of the long axis of the cell. The polypeptide is Cell division topological specificity factor (Photobacterium profundum (strain SS9)).